The primary structure comprises 589 residues: Putative phospholipase B-like 2 (589 aa).

Positions 1–41 (MVAPMYGSPGGRLARAVTRALALALVLALLVGLFLSGLTGA) are cleaved as a signal peptide. 2 N-linked (GlcNAc...) asparagine glycosylation sites follow: asparagine 88 and asparagine 110. Cysteine 142 and cysteine 152 are disulfide-bonded. 4 N-linked (GlcNAc...) asparagine glycosylation sites follow: asparagine 174, asparagine 231, asparagine 436, and asparagine 465. Cysteine 492 and cysteine 495 are oxidised to a cystine. N-linked (GlcNAc...) asparagine glycosylation occurs at asparagine 515.

The protein belongs to the phospholipase B-like family. Interacts with IGF2R. Glycosylated; contains mannose 6-phosphate sugars.

Its subcellular location is the lysosome lumen. Functionally, putative phospholipase. The polypeptide is Putative phospholipase B-like 2 (PLBD2) (Bos taurus (Bovine)).